A 151-amino-acid chain; its full sequence is Globin (151 aa).

A Globin domain is found at 2-151 (SLSDADKKAL…AAFNETLKKA (150 aa)). His-100 contributes to the heme b binding site.

This sequence belongs to the globin family.

In Biomphalaria glabrata (Bloodfluke planorb), this protein is Globin.